The sequence spans 266 residues: Energy-coupling factor transporter transmembrane protein EcfT (266 aa).

A run of 5 helical transmembrane segments spans residues I32–V52, P71–G91, L107–L127, V152–M172, and D246–W266.

It belongs to the energy-coupling factor EcfT family. As to quaternary structure, forms a stable energy-coupling factor (ECF) transporter complex composed of 2 membrane-embedded substrate-binding proteins (S component), 2 ATP-binding proteins (A component) and 2 transmembrane proteins (T component). May be able to interact with more than 1 S component at a time.

Its subcellular location is the cell membrane. Functionally, transmembrane (T) component of an energy-coupling factor (ECF) ABC-transporter complex. Unlike classic ABC transporters this ECF transporter provides the energy necessary to transport a number of different substrates. In Levilactobacillus brevis (strain ATCC 367 / BCRC 12310 / CIP 105137 / JCM 1170 / LMG 11437 / NCIMB 947 / NCTC 947) (Lactobacillus brevis), this protein is Energy-coupling factor transporter transmembrane protein EcfT.